The primary structure comprises 309 residues: Taste receptor type 2 member 113 (309 aa).

Over 1–8 (MVAVLQST) the chain is Extracellular. Residues 9-29 (FAIIFSMEFIVGTLGNGFIIL) traverse the membrane as a helical segment. The Cytoplasmic segment spans residues 30 to 55 (MTCIDWVRRRKISLVDQILTALAITR). A helical membrane pass occupies residues 56–76 (ITLILLVFIDWWVSVLFPALH). Residues 77–101 (ETGKILRMYFISWTVINHCNLWLTA) are Extracellular-facing. A helical transmembrane segment spans residues 102-122 (SLSIIYFLKIASFSSIIFLYL). At 123–127 (KFRVK) the chain is on the cytoplasmic side. Residues 128–148 (NVVFVTLLVSLFFLFINTAIV) form a helical membrane-spanning segment. Residues 149-185 (NVYFDVCFDGVQRNVSQVSRLYNHEQICKFLSFTNPM) lie on the Extracellular side of the membrane. Asn162 carries N-linked (GlcNAc...) asparagine glycosylation. The chain crosses the membrane as a helical span at residues 186–206 (FAFIPFVTSMATFFLLIFSLW). The Cytoplasmic segment spans residues 207-229 (RHLKNMKHNAEGCRDVSTIVHIR). The chain crosses the membrane as a helical span at residues 230–250 (ALQTIIVSVVLYSTFFLSFFV). The Extracellular segment spans residues 251-262 (KVWSSGSPERYL). A helical membrane pass occupies residues 263–283 (IFLFVWALGNAVLPAHTFVLI). The Cytoplasmic segment spans residues 284–309 (WGNCRLRWASLSLMLWLRYRFKNIDV).

Belongs to the G-protein coupled receptor T2R family.

The protein resides in the membrane. Functionally, putative taste receptor which may play a role in the perception of bitterness. This chain is Taste receptor type 2 member 113, found in Rattus norvegicus (Rat).